A 154-amino-acid polypeptide reads, in one-letter code: Fimbrial protein (154 aa).

Residues 1–6 constitute a propeptide, leader sequence; that stretch reads MKAQKG. Residue phenylalanine 7 is modified to N-methylphenylalanine. A helical transmembrane segment spans residues 7 to 27; it reads FTLIELMIVVAIIGILAAIAI. Cysteine 133 and cysteine 151 are joined by a disulfide.

Belongs to the N-Me-Phe pilin family. The pili are polar flexible filaments of about 5.4 nanometers diameter and 2.5 micrometers average length; they consist of only a single polypeptide chain arranged in a helical configuration of five subunits per turn in the assembled pilus.

It localises to the fimbrium. Its subcellular location is the membrane. The chain is Fimbrial protein (pilA) from Pseudomonas aeruginosa.